The following is a 180-amino-acid chain: Interleukin-17B (180 aa).

The first 22 residues, 1–22 (MDWPHSLLFLLAISIFLAPSHP), serve as a signal peptide directing secretion. The interval 22–44 (PRNTKGKRKGQGRPSPLAPGPHQ) is disordered. Over residues 23–32 (RNTKGKRKGQ) the composition is skewed to basic residues. N75 is a glycosylation site (N-linked (GlcNAc...) asparagine). 2 cysteine pairs are disulfide-bonded: C121/C176 and C126/C178.

This sequence belongs to the IL-17 family.

The protein localises to the secreted. Functionally, stimulates the release of tumor necrosis factor alpha and IL-1-beta from the monocytic cell line THP-1. The polypeptide is Interleukin-17B (Il17b) (Mus musculus (Mouse)).